A 152-amino-acid chain; its full sequence is Large ribosomal subunit protein bL9 (152 aa).

The protein belongs to the bacterial ribosomal protein bL9 family.

Binds to the 23S rRNA. In Streptococcus thermophilus (strain CNRZ 1066), this protein is Large ribosomal subunit protein bL9.